The sequence spans 484 residues: Keratin, type I cytoskeletal 14 (484 aa).

Positions 1-20 (MATCSRQFTSSSSMKGSCGI) are disordered. Residues 1-120 (MATCSRQFTS…GIGDGLLVGS (120 aa)) form a head region. Positions 121-156 (EKVTMQNLNDRLATYLDKVRALEEANTELEVKIRDW) are coil 1A. Residues 121-432 (EKVTMQNLND…RLLEGEDAHL (312 aa)) enclose the IF rod domain. Positions 157–174 (YQRQRPTEIKDYSPYFKT) are linker 1. The segment at 175 to 266 (IEDLKSKILA…KNHEEEMASM (92 aa)) is coil 1B. A linker 12 region spans residues 267 to 289 (RGQVGGDVNVEMDAAPGVDLSRI). Residues 290–428 (LNEMRDQYEK…ATYRRLLEGE (139 aa)) are coil 2. The tract at residues 429–484 (DAHLSSSQFSSSSQFSSGSQSSRDVTSTNRQIRTKVMDVHDGKVVSTHEQVLRTKN) is tail. The tract at residues 431 to 484 (HLSSSQFSSSSQFSSGSQSSRDVTSTNRQIRTKVMDVHDGKVVSTHEQVLRTKN) is interaction with Type I keratins and keratin filaments. A compositionally biased stretch (low complexity) spans 435 to 450 (SQFSSSSQFSSGSQSS). The interval 435–457 (SQFSSSSQFSSGSQSSRDVTSTN) is disordered. Residue serine 447 is modified to Phosphoserine.

It belongs to the intermediate filament family. As to quaternary structure, heterotetramer of two type I and two type II keratins. Forms a disulfide-linked heterodimer (via 2B domains) with KRT5 (via 2B domains). Forms a heterodimer with KRT1; the interaction is more abundant in the absence of KRT5. Interacts with PLEC isoform 1C, when in a heterodimer with KRT5. Interacts with TRADD and with keratin filaments. Associates with other type I keratins. Interacts with EPPK1. Interacts with KLHL24. Interacts with PKP1 (via N-terminus) and PKP2. Post-translationally, a disulfide bond is formed between rather than within filaments and promotes the formation of a keratin filament cage around the nucleus. Ubiquitinated by the BCR(KLHL24) E3 ubiquitin ligase complex. Expressed in the corneal epithelium (at protein level). Expressed in the basal layer of the epidermis and the outer root sheath of hair follicles (at protein level). Expressed in the epithelial basal layer in the tail epidermis. Expressed in the parabasal cell row, basal cell layer, and suprabasal epithelial layer of the tongue.

It is found in the cytoplasm. It localises to the nucleus. The nonhelical tail domain is involved in promoting KRT5-KRT14 filaments to self-organize into large bundles and enhances the mechanical properties involved in resilience of keratin intermediate filaments in vitro. The polypeptide is Keratin, type I cytoskeletal 14 (Krt14) (Mus musculus (Mouse)).